Consider the following 426-residue polypeptide: G2/mitotic-specific cyclin-A (426 aa).

A compositionally biased stretch (polar residues) spans 1-11 (MSMVHGSSFQI). A disordered region spans residues 1–22 (MSMVHGSSFQIAQDGENENQGV).

This sequence belongs to the cyclin family. Cyclin AB subfamily.

Its function is as follows. Essential for the control of the cell cycle at the G2/M (mitosis) transition. Interacts with the CDC2 and CDK2 protein kinases to form MPF. G2/M cyclins accumulate steadily during G2 and are abruptly destroyed at mitosis. In Patella vulgata (Common limpet), this protein is G2/mitotic-specific cyclin-A.